The chain runs to 154 residues: Putative pre-16S rRNA nuclease (154 aa).

This sequence belongs to the YqgF nuclease family.

It is found in the cytoplasm. In terms of biological role, could be a nuclease involved in processing of the 5'-end of pre-16S rRNA. The chain is Putative pre-16S rRNA nuclease from Rickettsia canadensis (strain McKiel).